The sequence spans 145 residues: 3-hydroxyacyl-[acyl-carrier-protein] dehydratase FabZ (145 aa).

His-49 is an active-site residue.

This sequence belongs to the thioester dehydratase family. FabZ subfamily.

The protein resides in the cytoplasm. The enzyme catalyses a (3R)-hydroxyacyl-[ACP] = a (2E)-enoyl-[ACP] + H2O. Functionally, involved in unsaturated fatty acids biosynthesis. Catalyzes the dehydration of short chain beta-hydroxyacyl-ACPs and long chain saturated and unsaturated beta-hydroxyacyl-ACPs. The chain is 3-hydroxyacyl-[acyl-carrier-protein] dehydratase FabZ from Rickettsia typhi (strain ATCC VR-144 / Wilmington).